The chain runs to 201 residues: Ribonuclease HII (201 aa).

The 190-residue stretch at 12–201 (DLVAGVDEVG…VRELLDVSVQ (190 aa)) folds into the RNase H type-2 domain. The a divalent metal cation site is built by aspartate 18, glutamate 19, and aspartate 110.

It belongs to the RNase HII family. Requires Mn(2+) as cofactor. Mg(2+) is required as a cofactor.

It localises to the cytoplasm. The enzyme catalyses Endonucleolytic cleavage to 5'-phosphomonoester.. Endonuclease that specifically degrades the RNA of RNA-DNA hybrids. In Pseudomonas aeruginosa (strain LESB58), this protein is Ribonuclease HII.